We begin with the raw amino-acid sequence, 907 residues long: Probable ubiquitin-conjugating enzyme E2 24 (907 aa).

2 disordered regions span residues 1–23 (MEMS…EHEE) and 485–509 (SSTV…EASS). The span at 495-509 (QDLSQKISQSDEASS) shows a compositional bias: polar residues. The region spanning 662 to 822 (SWVKKVQQEW…AFLITCKSMI (161 aa)) is the UBC core domain. The active-site Glycyl thioester intermediate is the Cys-748.

It belongs to the ubiquitin-conjugating enzyme family. In terms of assembly, interacts with PHO1. Interacts with NLA. In terms of tissue distribution, expressed in the vascular tissues of cotyledons, leaves, roots, sepals, filaments, anthers and junctions between the inflorescence stems and siliques.

Its subcellular location is the golgi apparatus membrane. It is found in the endoplasmic reticulum membrane. It catalyses the reaction S-ubiquitinyl-[E1 ubiquitin-activating enzyme]-L-cysteine + [E2 ubiquitin-conjugating enzyme]-L-cysteine = [E1 ubiquitin-activating enzyme]-L-cysteine + S-ubiquitinyl-[E2 ubiquitin-conjugating enzyme]-L-cysteine.. It participates in protein modification; protein ubiquitination. In terms of biological role, E2 ubiquitin-protein ligase that mediates E1-dependent protein ubiquitination. Mediates PHO1 degradation through multivesicular body-mediated vacuolar proteolysis in response to inorganic phosphate (Pi) availability. Negatively regulates the protein abundance of PHF1 and PHT1s under Pi-sufficient conditions by facilitating the degradation of PHT1 proteins at the endomembrane. Functions cooperatively with NLA to regulate the abundance of the inorganic phosphate (Pi) transporters PHT1-1, PHT1-2 and PHT1-3 in different subcellular compartments. Regulates Pi homeostasis by mediating, cooperatively with NLA, polyubiquitination of PHT1-4 and its targeting for degradation. This Arabidopsis thaliana (Mouse-ear cress) protein is Probable ubiquitin-conjugating enzyme E2 24.